We begin with the raw amino-acid sequence, 242 residues long: Small ribosomal subunit protein uS2 (242 aa).

It belongs to the universal ribosomal protein uS2 family.

This is Small ribosomal subunit protein uS2 from Aeromonas salmonicida (strain A449).